The sequence spans 247 residues: 3,4-dihydroxy-2-butanone 4-phosphate synthase (247 aa).

D-ribulose 5-phosphate is bound by residues arginine 38–glutamate 39, aspartate 43, arginine 179–threonine 183, and glutamate 203. Glutamate 39 serves as a coordination point for Mg(2+).

Belongs to the DHBP synthase family. As to quaternary structure, homodimer. The cofactor is Mg(2+). It depends on Mn(2+) as a cofactor.

The enzyme catalyses D-ribulose 5-phosphate = (2S)-2-hydroxy-3-oxobutyl phosphate + formate + H(+). Its pathway is cofactor biosynthesis; riboflavin biosynthesis; 2-hydroxy-3-oxobutyl phosphate from D-ribulose 5-phosphate: step 1/1. Functionally, catalyzes the conversion of D-ribulose 5-phosphate to formate and 3,4-dihydroxy-2-butanone 4-phosphate. The protein is 3,4-dihydroxy-2-butanone 4-phosphate synthase of Methanosarcina mazei (strain ATCC BAA-159 / DSM 3647 / Goe1 / Go1 / JCM 11833 / OCM 88) (Methanosarcina frisia).